The chain runs to 126 residues: DNA-directed RNA polymerase 35 kDa subunit (126 aa).

Belongs to the poxviridae DNA-directed RNA polymerase 35 kDa subunit family. In terms of assembly, the DNA-dependent RNA polymerase used for intermediate and late genes expression consists of eight subunits 147 kDa, 133 kDa, 35 kDa, 30 kDa, 22 kDa, 19 kDa, 18 kDa and 7 kDa totalling more than 500 kDa in mass. The same holoenzyme, with the addition of the transcription-specificity factor RAP94, is used for early gene expression.

It is found in the virion. It carries out the reaction RNA(n) + a ribonucleoside 5'-triphosphate = RNA(n+1) + diphosphate. Part of the DNA-dependent RNA polymerase which catalyzes the transcription of viral DNA into RNA using the four ribonucleoside triphosphates as substrates. Responsible for the transcription of early, intermediate and late genes. DNA-dependent RNA polymerase associates with the early transcription factor (ETF) thereby allowing the early genes transcription. Late transcription, and probably also intermediate transcription, require newly synthesized RNA polymerase. The sequence is that of DNA-directed RNA polymerase 35 kDa subunit (RPO35) from Ovis aries (Sheep).